Reading from the N-terminus, the 427-residue chain is Methylthioribose kinase 2 (427 aa).

Residues 49-53, Lys68, and 122-124 each bind ATP; these read DGNLN and RYI. Asn51 contacts substrate. Asp243 is a binding site for substrate. 260 to 262 lines the ATP pocket; the sequence is DPE. Arg370 is a substrate binding site.

It belongs to the methylthioribose kinase family. In terms of assembly, homodimer.

It catalyses the reaction 5-(methylsulfanyl)-D-ribose + ATP = 5-(methylsulfanyl)-alpha-D-ribose 1-phosphate + ADP + H(+). It participates in amino-acid biosynthesis; L-methionine biosynthesis via salvage pathway; S-methyl-5-thio-alpha-D-ribose 1-phosphate from S-methyl-5'-thioadenosine (hydrolase route): step 2/2. In terms of biological role, catalyzes the phosphorylation of methylthioribose into methylthioribose-1-phosphate. The polypeptide is Methylthioribose kinase 2 (MTK2) (Oryza sativa subsp. japonica (Rice)).